Reading from the N-terminus, the 21-residue chain is ATVVAPKYTAIKPLGDRVLVK.

The protein belongs to the GroES chaperonin family. Forms stable complexes with CPN60 in the presence of ATP.

It is found in the plastid. Its subcellular location is the chloroplast. Seems to function only as a co-chaperone, along with cpn60, and in certain cases is essential for the discharge of biologically active proteins from cpn60. In Pisum sativum (Garden pea), this protein is 20 kDa chaperonin, chloroplastic (CPN21).